The following is a 152-amino-acid chain: Protein-export protein SecB (152 aa).

It belongs to the SecB family. In terms of assembly, homotetramer, a dimer of dimers. One homotetramer interacts with 1 SecA dimer.

The protein localises to the cytoplasm. In terms of biological role, one of the proteins required for the normal export of preproteins out of the cell cytoplasm. It is a molecular chaperone that binds to a subset of precursor proteins, maintaining them in a translocation-competent state. It also specifically binds to its receptor SecA. The polypeptide is Protein-export protein SecB (Rickettsia rickettsii (strain Iowa)).